A 343-amino-acid chain; its full sequence is Phosphatidylglycerol--prolipoprotein diacylglyceryl transferase 1 (343 aa).

4 helical membrane passes run 19–39 (VPLR…VWLG), 54–74 (ADIA…YHVI), 93–113 (IWEG…GAWI), and 119–139 (GVPM…AQAI). Arg-141 lines the a 1,2-diacyl-sn-glycero-3-phospho-(1'-sn-glycerol) pocket. The next 3 helical transmembrane spans lie at 176–196 (HPTF…VIWA), 202–224 (LGHG…WIEY), and 238–258 (LNNW…VLSA). Residues 269–343 (EPGAETAAGD…TNGADSAKKG (75 aa)) are disordered. Over residues 283-293 (ADKDVKGTKDA) the composition is skewed to basic and acidic residues. The segment covering 314–324 (APEDTSGADEA) has biased composition (acidic residues).

The protein belongs to the Lgt family.

It localises to the cell membrane. It catalyses the reaction L-cysteinyl-[prolipoprotein] + a 1,2-diacyl-sn-glycero-3-phospho-(1'-sn-glycerol) = an S-1,2-diacyl-sn-glyceryl-L-cysteinyl-[prolipoprotein] + sn-glycerol 1-phosphate + H(+). It participates in protein modification; lipoprotein biosynthesis (diacylglyceryl transfer). Functionally, catalyzes the transfer of the diacylglyceryl group from phosphatidylglycerol to the sulfhydryl group of the N-terminal cysteine of a prolipoprotein, the first step in the formation of mature lipoproteins. The chain is Phosphatidylglycerol--prolipoprotein diacylglyceryl transferase 1 from Streptomyces coelicolor (strain ATCC BAA-471 / A3(2) / M145).